We begin with the raw amino-acid sequence, 156 residues long: ATP synthase subunit b', chloroplastic (156 aa).

A helical membrane pass occupies residues 24-44 (ATLPLVAIQFILLMVLLNILL).

Belongs to the ATPase B chain family. In terms of assembly, F-type ATPases have 2 components, F(1) - the catalytic core - and F(0) - the membrane proton channel. F(1) has five subunits: alpha(3), beta(3), gamma(1), delta(1), epsilon(1). F(0) has four main subunits: a(1), b(1), b'(1) and c(10-14). The alpha and beta chains form an alternating ring which encloses part of the gamma chain. F(1) is attached to F(0) by a central stalk formed by the gamma and epsilon chains, while a peripheral stalk is formed by the delta, b and b' chains.

Its subcellular location is the plastid. It is found in the chloroplast thylakoid membrane. Functionally, f(1)F(0) ATP synthase produces ATP from ADP in the presence of a proton or sodium gradient. F-type ATPases consist of two structural domains, F(1) containing the extramembraneous catalytic core and F(0) containing the membrane proton channel, linked together by a central stalk and a peripheral stalk. During catalysis, ATP synthesis in the catalytic domain of F(1) is coupled via a rotary mechanism of the central stalk subunits to proton translocation. Component of the F(0) channel, it forms part of the peripheral stalk, linking F(1) to F(0). The b'-subunit is a diverged and duplicated form of b found in plants and photosynthetic bacteria. This chain is ATP synthase subunit b', chloroplastic, found in Phaeodactylum tricornutum (strain CCAP 1055/1).